The sequence spans 842 residues: MTLHSTNVTRTDSKRVKVYLLENNEWKDTGTGYCHGEVVSTELVDNKREEAFLLVTNENEPHQVLLRSKLEGNIEYQRQEETLIVWKDVEGKDIALSFEESLGCDTLCEFVVNVQRSIEPNISLVAVKSVDNGMGSIHEIITGPVALPSIETKQNTTTLLDALKILNDNTAFEYLKTETVEYVLKNNYIDLLIAHFHKAETEKIPRDLFLISNILKTMILYNQRDIIESLVEDKRIMGVVGILEYDTEFPTSKANHRKCLESEAPSFKEIIPLENEELKTVIKKCFRLQFLKDVVLVQFLDDNNLGLITDIILDLETCIIDSLQTDPFLDNLLQLYSKDKIYNSELTDESTDLIQKRKEGIKLLHQCIQMSRNLEHMDKSKFYKVLVKKGLFNLLDYAFNFEKDNNLRILATDTIIAIVEHDILLIHNVQKEISQHNDRQSLCLNGNQNEAKSSEANATVDLTLLEILSTILLTDNNPGLREQVVQALNTLLHPEGCIGDGFDNQLDNGLDFDDNILLRKDSNNLDDDFQEQTGMSKIPPFTLNSSQQLENQIAEYFKQFYIQIAPKLFGPLIENNCMSDEERQKYVNDDVLMIHLVKLVSFICSEHERLISRKFVLENGILDSISNLINPGYRLQLRLTALRCIKNIICLDDKYYHRHMISNELYSPIMKLMEEHLLEDNLANSALQDFFRIIASECHVFKDDSELFNYSDNAYNINATELHRRSGSIPSSNFTMLNKHINDKYPEVLDKLLYITFVKQLREQYKEHSKLLPNGKKRKISADNVNDFDGDKINNGKKGQLSKNKVMNYNSFETHIDDRASSTDSQPATCLVGSPAAYDNAV.

As to quaternary structure, regulatory subunit 3 (R3) of the histone H2A phosphatase complex (HTP-C) consisting of PPH3, PSY2 and PSY4.

The protein localises to the nucleus. Its function is as follows. Core regulatory subunit of the histone H2A phosphatase complex, which dephosphorylates H2AS128ph (gamma-H2A) that has been displaced from sites of DNA lesions in the double-stranded DNA break repair process. Dephosphorylation is necessary for efficient recovery from the DNA damage checkpoint. This chain is Serine/threonine-protein phosphatase 4 regulatory subunit 3 (PSY2), found in Candida glabrata (strain ATCC 2001 / BCRC 20586 / JCM 3761 / NBRC 0622 / NRRL Y-65 / CBS 138) (Yeast).